We begin with the raw amino-acid sequence, 156 residues long: ATP synthase subunit b (156 aa).

Residues 11-31 form a helical membrane-spanning segment; the sequence is AIAFVIFVWFCMKYVWPPLMA.

It belongs to the ATPase B chain family. In terms of assembly, F-type ATPases have 2 components, F(1) - the catalytic core - and F(0) - the membrane proton channel. F(1) has five subunits: alpha(3), beta(3), gamma(1), delta(1), epsilon(1). F(0) has three main subunits: a(1), b(2) and c(10-14). The alpha and beta chains form an alternating ring which encloses part of the gamma chain. F(1) is attached to F(0) by a central stalk formed by the gamma and epsilon chains, while a peripheral stalk is formed by the delta and b chains.

Its subcellular location is the cell inner membrane. F(1)F(0) ATP synthase produces ATP from ADP in the presence of a proton or sodium gradient. F-type ATPases consist of two structural domains, F(1) containing the extramembraneous catalytic core and F(0) containing the membrane proton channel, linked together by a central stalk and a peripheral stalk. During catalysis, ATP synthesis in the catalytic domain of F(1) is coupled via a rotary mechanism of the central stalk subunits to proton translocation. Its function is as follows. Component of the F(0) channel, it forms part of the peripheral stalk, linking F(1) to F(0). The polypeptide is ATP synthase subunit b (Klebsiella pneumoniae (strain 342)).